The primary structure comprises 192 residues: T-cell surface glycoprotein CD3 epsilon chain (192 aa).

The first 21 residues, 1 to 21 (MQTGNLWQVLGLCLLLVGAWA), serve as a signal peptide directing secretion. Over 22 to 111 (QDDTEQNPYE…RVCKNCMEVN (90 aa)) the chain is Extracellular. Residues 27 to 98 (QNPYEVSISG…GNTEAAHTLY (72 aa)) enclose the Ig-like domain. A disulfide bond links cysteine 43 and cysteine 84. A helical transmembrane segment spans residues 112–137 (LLEVATIIVVDICVTLGLLLLVYYWS). Residues 138-192 (KSRKAKATPMTRGAGAGGRPRGQNRERPPPVPNPDYEPIRKGQRDLYSGLNQRGV) are Cytoplasmic-facing. Residues 146-192 (PMTRGAGAGGRPRGQNRERPPPVPNPDYEPIRKGQRDLYSGLNQRGV) form a disordered region. An NUMB-binding region region spans residues 160-177 (QNRERPPPVPNPDYEPIR). The 28-residue stretch at 163 to 190 (ERPPPVPNPDYEPIRKGQRDLYSGLNQR) folds into the ITAM domain. The interval 164–171 (RPPPVPNP) is proline-rich sequence. Phosphotyrosine occurs at positions 173 and 184.

In terms of assembly, the TCR-CD3 complex is composed of a CD3D/CD3E and a CD3G/CD3E heterodimers that preferentially associate with TCRalpha and TCRbeta, respectively, to form TCRalpha/CD3E/CD3G and TCRbeta/CD3G/CD3E trimers. In turn, the hexamer interacts with CD3Z homodimer to form the TCR-CD3 complex. Alternatively, TCRalpha and TCRbeta can be replaced by TCRgamma and TCRdelta. Interacts with CD6. Interacts (via Proline-rich sequence) with NCK1; the interaction is ligand dependent but independent of tyrosine kinase activation. Post-translationally, phosphorylated on Tyr residues after T-cell receptor triggering by LCK in association with CD4/CD8.

It is found in the cell membrane. Its function is as follows. Part of the TCR-CD3 complex present on T-lymphocyte cell surface that plays an essential role in adaptive immune response. When antigen presenting cells (APCs) activate T-cell receptor (TCR), TCR-mediated signals are transmitted across the cell membrane by the CD3 chains CD3D, CD3E, CD3G and CD3Z. All CD3 chains contain immunoreceptor tyrosine-based activation motifs (ITAMs) in their cytoplasmic domain. Upon TCR engagement, these motifs become phosphorylated by Src family protein tyrosine kinases LCK and FYN, resulting in the activation of downstream signaling pathways. In addition of this role of signal transduction in T-cell activation, CD3E plays an essential role in correct T-cell development. Also participates in internalization and cell surface down-regulation of TCR-CD3 complexes via endocytosis sequences present in CD3E cytosolic region. In addition to its role as a TCR coreceptor, it serves as a receptor for ITPRIPL1. Ligand recognition inhibits T-cell activation by promoting interaction with NCK1, which prevents CD3E-ZAP70 interaction and blocks the ERK-NFkB signaling cascade and calcium influx. The polypeptide is T-cell surface glycoprotein CD3 epsilon chain (CD3E) (Ovis aries (Sheep)).